A 371-amino-acid polypeptide reads, in one-letter code: Glycosyltransferase 8 domain-containing protein 1 (371 aa).

Over 1–7 (MSFRKVN) the chain is Cytoplasmic. Residues 8 to 28 (IIIWVLAVVLFLLVLHHNFLS) form a helical; Signal-anchor for type II membrane protein membrane-spanning segment. Residues 29–371 (LSSLLKNDIS…RRHMDTSNIK (343 aa)) lie on the Lumenal side of the membrane. N257 carries an N-linked (GlcNAc...) asparagine glycan.

It belongs to the glycosyltransferase 8 family.

Its subcellular location is the membrane. The protein is Glycosyltransferase 8 domain-containing protein 1 (Glt8d1) of Mus musculus (Mouse).